The primary structure comprises 356 residues: Glycerol-1-phosphate dehydrogenase [NAD(P)+] (356 aa).

NAD(+)-binding positions include 103 to 107 (GRSID) and 125 to 128 (TAAS). D130 provides a ligand contact to substrate. Residue S134 coordinates NAD(+). D177 provides a ligand contact to substrate. The Zn(2+) site is built by D177 and H257. Residue H261 coordinates substrate. H273 contacts Zn(2+).

Belongs to the glycerol-1-phosphate dehydrogenase family. Zn(2+) serves as cofactor.

The protein resides in the cytoplasm. It carries out the reaction sn-glycerol 1-phosphate + NAD(+) = dihydroxyacetone phosphate + NADH + H(+). It catalyses the reaction sn-glycerol 1-phosphate + NADP(+) = dihydroxyacetone phosphate + NADPH + H(+). It participates in membrane lipid metabolism; glycerophospholipid metabolism. Functionally, catalyzes the NAD(P)H-dependent reduction of dihydroxyacetonephosphate (DHAP or glycerone phosphate) to glycerol 1-phosphate (G1P). The G1P thus generated is used as the glycerophosphate backbone of phospholipids in the cellular membranes of Archaea. In Methanosarcina mazei (strain ATCC BAA-159 / DSM 3647 / Goe1 / Go1 / JCM 11833 / OCM 88) (Methanosarcina frisia), this protein is Glycerol-1-phosphate dehydrogenase [NAD(P)+].